Here is a 304-residue protein sequence, read N- to C-terminus: Eukaryotic translation initiation factor 2 subunit alpha (304 aa).

The S1 motif domain occupies 17–88 (DDIVMVNVQQ…EKGYIDLSKR (72 aa)). Serine 52 carries the phosphoserine; by GCN2 modification. The segment at 283 to 304 (LESKELDNRSDSEDDEDESDDE) is disordered. Positions 284 to 293 (ESKELDNRSD) are enriched in basic and acidic residues. A phosphoserine mark is found at serine 292 and serine 294. The segment covering 294–304 (SEDDEDESDDE) has biased composition (acidic residues).

It belongs to the eIF-2-alpha family. In terms of assembly, eukaryotic translation initiation factor 2 eIF2 is a heterotrimeric complex composed of an alpha, a beta and a gamma subunit. The factors eIF-1, eIF-2, eIF-3, TIF5/eIF-5 and methionyl-tRNAi form a multifactor complex (MFC) that may bind to the 40S ribosome. Interacts with CDC123; the interaction is direct. Interacts with GCD1. Phosphorylated; phosphorylation on Ser-52 by the GCN2 protein kinase occurs in response to low amino acid, carbon, or purine availability. Phosphorylation inhibits the guanine nucleotide exchange factor activity of the eIF2B complex.

Its subcellular location is the cytoplasm. The protein localises to the cytosol. In terms of biological role, eIF-2 functions in the early steps of protein synthesis by forming a ternary complex with GTP and initiator tRNA. This complex binds to a 40S ribosomal subunit, followed by mRNA binding to form a 43S pre-initiation complex. Junction of the 60S ribosomal subunit to form the 80S initiation complex is preceded by hydrolysis of the GTP bound to eIF-2 and release of an eIF-2-GDP binary complex. In order for eIF-2 to recycle and catalyze another round of initiation, the GDP bound to eIF-2 must exchange with GTP by way of a reaction catalyzed by eIF2B. This is Eukaryotic translation initiation factor 2 subunit alpha from Saccharomyces cerevisiae (strain ATCC 204508 / S288c) (Baker's yeast).